A 163-amino-acid polypeptide reads, in one-letter code: Large ribosomal subunit protein uL10 (163 aa).

This sequence belongs to the universal ribosomal protein uL10 family. As to quaternary structure, part of the ribosomal stalk of the 50S ribosomal subunit. The N-terminus interacts with L11 and the large rRNA to form the base of the stalk. The C-terminus forms an elongated spine to which L12 dimers bind in a sequential fashion forming a multimeric L10(L12)X complex.

In terms of biological role, forms part of the ribosomal stalk, playing a central role in the interaction of the ribosome with GTP-bound translation factors. The sequence is that of Large ribosomal subunit protein uL10 from Actinobacillus succinogenes (strain ATCC 55618 / DSM 22257 / CCUG 43843 / 130Z).